We begin with the raw amino-acid sequence, 374 residues long: Low-specificity L-threonine aldolase (374 aa).

Position 213 is an N6-(pyridoxal phosphate)lysine (K213). Positions 354-374 are disordered; sequence HPHKDDGRNNKKMYSLDAIKK.

The protein belongs to the threonine aldolase family. Homotetramer. Requires pyridoxal 5'-phosphate as cofactor.

The enzyme catalyses L-threonine = acetaldehyde + glycine. It catalyses the reaction L-allo-threonine = acetaldehyde + glycine. It participates in amino-acid degradation; L-threonine degradation via aldolase pathway; acetaldehyde and glycine from L-threonine: step 1/1. This is Low-specificity L-threonine aldolase (GLY1) from Candida albicans (Yeast).